Here is a 676-residue protein sequence, read N- to C-terminus: Envelope glycoprotein (676 aa).

Residues M1–S32 form the signal peptide. Residues M33–Q650 are Extracellular-facing. N40 carries an N-linked (GlcNAc...) asparagine; by host glycan. 5 disulfides stabilise this stretch: C53–C609, C108–C135, C121–C147, C511–C556, and C601–C608. The tract at residues K54–E201 is receptor-binding. N-linked (GlcNAc...) asparagine; by host glycans are attached at residues N204, N208, N238, N257, N268, N296, and N314. Residues E305–T485 form a mucin-like region region. A disordered region spans residues L313–V351. The segment covering R330–P344 has biased composition (basic and acidic residues). N366 carries N-linked (GlcNAc...) asparagine; by host glycosylation. The interval S406–L458 is disordered. Composition is skewed to polar residues over residues P415–T430 and T438–L458. The N-linked (GlcNAc...) asparagine; by host glycan is linked to N463. Residues H524–A539 form a fusion peptide region. The stretch at L554–R595 forms a coiled coil. An N-linked (GlcNAc...) asparagine; by host glycan is attached at N563. The stretch at W615 to P634 forms a coiled coil. N618 carries N-linked (GlcNAc...) asparagine; by host glycosylation. The helical transmembrane segment at W651–V671 threads the bilayer. Residues C670 and C672 are each lipidated (S-palmitoyl cysteine; by host). At C672–C676 the chain is on the cytoplasmic side.

It belongs to the filoviruses glycoprotein family. Homotrimer; each monomer consists of a GP1 and a GP2 subunit linked by disulfide bonds. The resulting peplomers (GP1,2) protrude from the virus surface as spikes. Interacts with host integrin alpha-V/ITGAV. Interacts with host CLEC10A. Binds also to host CD209 and CLEC4M/DC-SIGN(R). Interacts with host FOLR1. Interacts with BST2; this interaction inhibits the antiviral effect of BST2 and this allows viral release from infected cells. Interacts with host FCN1; this interaction enhances viral entry. Interacts with host TLR4; this interaction induces cell death in T-lymphocytes or proinflammatory cytokines and SOCS1 production in monocytes. In terms of assembly, interacts with host entry receptor NPC1. As to quaternary structure, GP1 and GP2delta are part of GP1,2delta soluble complexes released by ectodomain shedding. In terms of processing, the signal peptide region modulates GP's high mannose glycosylation, thereby determining the efficiency of the interactions with DC-SIGN(R). N-glycosylated. Post-translationally, O-glycosylated in the mucin-like region. In terms of processing, palmitoylation of GP2 is not required for its function. Specific enzymatic cleavages in vivo yield mature proteins. The precursor is processed into GP1 and GP2 by host cell furin in the trans Golgi, and maybe by other host proteases, to yield the mature GP1 and GP2 proteins. The cleavage site corresponds to the furin optimal cleavage sequence [KR]-X-[KR]-R. This cleavage does not seem to be required for function. After the internalization of the virus into cell endosomes, GP1 C-terminus is removed by the endosomal proteases cathepsin B, cathepsin L, or both, leaving a 19-kDa N-terminal fragment which is further digested by cathepsin B. Proteolytic processing of GP1,2 by host ADAM17 can remove the transmembrane anchor of GP2 and leads to shedding of complexes consisting in GP1 and truncated GP2 (GP1,2delta).

It is found in the virion membrane. The protein resides in the host cell membrane. The protein localises to the secreted. Its function is as follows. Trimeric GP1,2 complexes form the virion surface spikes and mediate the viral entry processes, with GP1 acting as the receptor-binding subunit and GP2 as the membrane fusion subunit. At later times of infection, down-regulates the expression of various host cell surface molecules that are essential for immune surveillance and cell adhesion. Down-modulates several integrins including ITGA1, ITGA2, ITGA3, ITGA4, ITGA5, ITGA6, ITGAV and ITGB1. This decrease in cell adhesion molecules may lead to cell detachment, contributing to the disruption of blood vessel integrity and hemorrhages developed during infection (cytotoxicity). Interacts with host TLR4 and thereby stimulates the differentiation and activation of monocytes leading to bystander death of T-lymphocytes. Down-regulates as well the function of host natural killer cells. Counteracts the antiviral effect of host BST2/tetherin that restricts release of progeny virions from infected cells. However, cooperates with VP40 and host BST2 to activate canonical NF-kappa-B pathway in a manner dependent on neddylation. Functionally, functions as a decoy for anti-GP1,2 antibodies thereby contributing to viral immune evasion. Interacts and activates host macrophages and dendritic cells inducing up-regulation of cytokine transcription. This effect is mediated throught activation of host TLR4. In terms of biological role, responsible for binding to the receptor(s) on target cells. Interacts with CD209/DC-SIGN and CLEC4M/DC-SIGNR which act as cofactors for virus entry into dendritic cells (DCs) and endothelial cells. Binding to the macrophage specific lectin CLEC10A also seem to enhance virus infectivity. Interaction with FOLR1/folate receptor alpha may be a cofactor for virus entry in some cell types, although results are contradictory. Members of the Tyro3 receptor tyrosine kinase family also seem to be cell entry factors in filovirus infection. Once attached, the virions are internalized through clathrin-dependent endocytosis and/or macropinocytosis. After internalization of the virus into the endosomes of the host cell, proteolysis of GP1 by two cysteine proteases, CTSB/cathepsin B and CTSL/cathepsin L removes the glycan cap and allows GP1 binding to the host entry receptor NPC1. NPC1-binding, Ca(2+) and acidic pH induce a conformational change of GP2, which unmasks its fusion peptide and permit membranes fusion. Acts as a class I viral fusion protein. Under the current model, the protein has at least 3 conformational states: pre-fusion native state, pre-hairpin intermediate state, and post-fusion hairpin state. During viral and target cell membrane fusion, the coiled coil regions (heptad repeats) assume a trimer-of-hairpins structure, positioning the fusion peptide in close proximity to the C-terminal region of the ectodomain. The formation of this structure appears to drive apposition and subsequent fusion of viral and target cell membranes. Responsible for penetration of the virus into the cell cytoplasm by mediating the fusion of the membrane of the endocytosed virus particle with the endosomal membrane. Low pH in endosomes induces an irreversible conformational change in GP2, releasing the fusion hydrophobic peptide. In Epomops franqueti (Franquet's epauletted fruit bat), this protein is Envelope glycoprotein (GP).